A 90-amino-acid polypeptide reads, in one-letter code: UPF0235 protein CPn_0497/CP_0257/CPj0497/CpB0517 (90 aa).

The protein belongs to the UPF0235 family.

This is UPF0235 protein CPn_0497/CP_0257/CPj0497/CpB0517 from Chlamydia pneumoniae (Chlamydophila pneumoniae).